The following is a 581-amino-acid chain: A-type ATP synthase subunit A (581 aa).

Position 234–241 (234–241 (GPFGSGKT)) interacts with ATP.

Belongs to the ATPase alpha/beta chains family. In terms of assembly, has multiple subunits with at least A(3), B(3), C, D, E, F, H, I and proteolipid K(x).

The protein resides in the cell membrane. It catalyses the reaction ATP + H2O + 4 H(+)(in) = ADP + phosphate + 5 H(+)(out). Component of the A-type ATP synthase that produces ATP from ADP in the presence of a proton gradient across the membrane. The A chain is the catalytic subunit. In Archaeoglobus fulgidus (strain ATCC 49558 / DSM 4304 / JCM 9628 / NBRC 100126 / VC-16), this protein is A-type ATP synthase subunit A.